The sequence spans 185 residues: Dual specificity protein phosphatase 3 (185 aa).

In terms of domain architecture, Tyrosine-protein phosphatase spans 28–179; sequence QPCNEVVPRV…LCQLNDRLAK (152 aa). The Phosphocysteine intermediate role is filled by C124.

Belongs to the protein-tyrosine phosphatase family. Non-receptor class dual specificity subfamily. In terms of assembly, microtubule inner protein component of sperm flagellar doublet microtubules. Interacts with VRK3; this interaction activates DUSP3 phosphatase activity.

The protein resides in the nucleus. Its subcellular location is the cytoplasm. It localises to the cytoskeleton. The protein localises to the flagellum axoneme. The catalysed reaction is O-phospho-L-tyrosyl-[protein] + H2O = L-tyrosyl-[protein] + phosphate. It carries out the reaction O-phospho-L-seryl-[protein] + H2O = L-seryl-[protein] + phosphate. The enzyme catalyses O-phospho-L-threonyl-[protein] + H2O = L-threonyl-[protein] + phosphate. Functionally, shows activity both for tyrosine-protein phosphate and serine-protein phosphate, but displays a strong preference toward phosphotyrosines. Specifically dephosphorylates and inactivates ERK1 and ERK2. The chain is Dual specificity protein phosphatase 3 (Dusp3) from Mus musculus (Mouse).